The primary structure comprises 497 residues: Probable small intestine urate exporter (497 aa).

5 N-linked (GlcNAc...) asparagine glycosylation sites follow: Asn47, Asn56, Asn66, Asn75, and Asn90. 10 helical membrane passes run 149–169, 171–191, 203–223, 230–250, 292–312, 332–352, 368–388, 398–418, 431–451, and 461–481; these read SFLT…LIVL, IVQG…WVKW, IAGS…GLLC, YVFY…FPLI, LPLW…YTIM, ILSA…GLLA, KLFT…LPWV, FLVL…VNFL, LLQV…GFFI, and NVFL…LIFG.

It belongs to the major facilitator superfamily. Sodium/anion cotransporter family. Abundantly expressed in pancreas, liver, colon and small intestine, less in kidney. Not detected in the adrenal glands, brain, placenta, heart, testis, skeletal muscle, and lungs.

The protein localises to the apical cell membrane. The enzyme catalyses 3 Na(+)(out) + phosphate(out) = 3 Na(+)(in) + phosphate(in). The catalysed reaction is urate(out) + n chloride(in) = urate(in) + n chloride(out). It carries out the reaction L-thyroxine(out) = L-thyroxine(in). It catalyses the reaction 3,3',5-triiodo-L-thyronine(out) = 3,3',5-triiodo-L-thyronine(in). Its function is as follows. Acts as a membrane potential-dependent organic anion transporter, the transport requires a low concentration of chloride ions. Mediates chloride-dependent transport of urate. Mediates sodium-independent high affinity transport of thyroid hormones including L-thyroxine (T4) and 3,3',5-triiodo-L-thyronine (T3). Can actively transport inorganic phosphate into cells via Na(+) cotransport. The sequence is that of Probable small intestine urate exporter (SLC17A4) from Homo sapiens (Human).